Reading from the N-terminus, the 509-residue chain is Maturase K (509 aa).

The protein belongs to the intron maturase 2 family. MatK subfamily.

The protein resides in the plastid. Its subcellular location is the chloroplast. In terms of biological role, usually encoded in the trnK tRNA gene intron. Probably assists in splicing its own and other chloroplast group II introns. This Avicennia marina (Grey mangrove) protein is Maturase K.